The chain runs to 434 residues: Adenylosuccinate synthetase (434 aa).

GTP is bound by residues 14–20 (GDEGKGK) and 42–44 (GHE). Aspartate 15 acts as the Proton acceptor in catalysis. Residues aspartate 15 and glycine 42 each contribute to the Mg(2+) site. Residues 15–18 (DEGK), 40–43 (NSGH), threonine 133, arginine 147, asparagine 229, threonine 244, and arginine 308 each bind IMP. Catalysis depends on histidine 43, which acts as the Proton donor. Residue 304–310 (VTTGRVR) participates in substrate binding. GTP is bound by residues arginine 310, 336–338 (KLD), and 422–424 (GTG).

This sequence belongs to the adenylosuccinate synthetase family. As to quaternary structure, homodimer. It depends on Mg(2+) as a cofactor.

Its subcellular location is the cytoplasm. The enzyme catalyses IMP + L-aspartate + GTP = N(6)-(1,2-dicarboxyethyl)-AMP + GDP + phosphate + 2 H(+). Its pathway is purine metabolism; AMP biosynthesis via de novo pathway; AMP from IMP: step 1/2. Plays an important role in the salvage pathway for purine nucleotide biosynthesis. Catalyzes the first committed step in the biosynthesis of AMP from IMP. In Theileria parva (East coast fever infection agent), this protein is Adenylosuccinate synthetase.